Here is a 152-residue protein sequence, read N- to C-terminus: Interleukin-1 family member 10 (152 aa).

It belongs to the IL-1 family. Interacts with cargo receptor TMED10; the interaction mediates the translocation from the cytoplasm into the ERGIC (endoplasmic reticulum-Golgi intermediate compartment) and thereby secretion. Expressed in fetal skin, spleen and tonsil. Expressed mostly in the basal epithelia of skin and in proliferating B-cells of the tonsil.

It is found in the cytoplasm. Its subcellular location is the secreted. In terms of biological role, cytokine with immunomodulatory activity. Alone, does not induce cytokine production, but reduces IL22 and IL17A production by T-cells in response to heat-killed Candida albicans. Reduces IL36G-induced production of IL8 by peripheral blood mononuclear cells. Increases IL6 production by dendritic cells stimulated by bacterial lipopolysaccharides (LPS). Ligand for IL-36R/IL1RL2. This chain is Interleukin-1 family member 10, found in Homo sapiens (Human).